Consider the following 296-residue polypeptide: Mycothiol acetyltransferase (296 aa).

2 consecutive N-acetyltransferase domains span residues 1 to 148 and 151 to 296; these read MTEW…IRVD and VTVR…YGRA. Glu-34 provides a ligand contact to 1D-myo-inositol 2-(L-cysteinylamino)-2-deoxy-alpha-D-glucopyranoside. Residues 79–81 and 87–92 each bind acetyl-CoA; these read LVV and RRGIGS. 3 residues coordinate 1D-myo-inositol 2-(L-cysteinylamino)-2-deoxy-alpha-D-glucopyranoside: Glu-178, Lys-219, and Glu-229. Acetyl-CoA-binding positions include 233 to 235 and 240 to 246; these read VGV and QGRGLGH. Tyr-267 is a binding site for 1D-myo-inositol 2-(L-cysteinylamino)-2-deoxy-alpha-D-glucopyranoside. 272-277 contacts acetyl-CoA; the sequence is NQAALR.

It belongs to the acetyltransferase family. MshD subfamily. As to quaternary structure, monomer.

It carries out the reaction 1D-myo-inositol 2-(L-cysteinylamino)-2-deoxy-alpha-D-glucopyranoside + acetyl-CoA = mycothiol + CoA + H(+). Its function is as follows. Catalyzes the transfer of acetyl from acetyl-CoA to desacetylmycothiol (Cys-GlcN-Ins) to form mycothiol. This is Mycothiol acetyltransferase from Mycobacteroides abscessus (strain ATCC 19977 / DSM 44196 / CCUG 20993 / CIP 104536 / JCM 13569 / NCTC 13031 / TMC 1543 / L948) (Mycobacterium abscessus).